Here is a 50-residue protein sequence, read N- to C-terminus: Large ribosomal subunit protein bL33 (50 aa).

This sequence belongs to the bacterial ribosomal protein bL33 family.

This Aquifex aeolicus (strain VF5) protein is Large ribosomal subunit protein bL33 (rpmG).